Here is a 453-residue protein sequence, read N- to C-terminus: Ribosomal protein uS12 methylthiotransferase RimO (453 aa).

An MTTase N-terminal domain is found at threonine 4 to glutamate 120. Positions 13, 49, 83, 161, 165, and 168 each coordinate [4Fe-4S] cluster. The region spanning serine 147–glutamate 377 is the Radical SAM core domain. The TRAM domain occupies glutamine 380 to serine 450.

It belongs to the methylthiotransferase family. RimO subfamily. [4Fe-4S] cluster is required as a cofactor.

Its subcellular location is the cytoplasm. The catalysed reaction is L-aspartate(89)-[ribosomal protein uS12]-hydrogen + (sulfur carrier)-SH + AH2 + 2 S-adenosyl-L-methionine = 3-methylsulfanyl-L-aspartate(89)-[ribosomal protein uS12]-hydrogen + (sulfur carrier)-H + 5'-deoxyadenosine + L-methionine + A + S-adenosyl-L-homocysteine + 2 H(+). Its function is as follows. Catalyzes the methylthiolation of an aspartic acid residue of ribosomal protein uS12. The polypeptide is Ribosomal protein uS12 methylthiotransferase RimO (Syntrophus aciditrophicus (strain SB)).